The sequence spans 796 residues: DNA damage-responsive transcriptional repressor RPH1 (796 aa).

The JmjN domain maps to 14-55 (VPVFKPTYEQFEDFYAYCKAINKYGMKSGVVKVIPPKEWKDK). The 163-residue stretch at 193-355 (PEGLNVWNVA…IGKKAGKCHC (163 aa)) folds into the JmjC domain. Threonine 399 is subject to Phosphothreonine. Phosphoserine occurs at positions 430, 459, 557, 561, 575, and 584. The Bipartite nuclear localization signal signature appears at 455–471 (KRISSFQEQPLNKLLKR). A disordered region spans residues 599–692 (RQQHSQQHSF…DKEQGSSPLN (94 aa)). Over residues 601-621 (QHSQQHSFSTPSTVSNLSTSV) the composition is skewed to polar residues. Residues 629 to 640 (NDIKTPHPERPN) are compositionally biased toward basic and acidic residues. Serine 652 carries the post-translational modification Phosphoserine. Residues 654-669 (VETSKSNLILSKVAST) show a composition bias toward polar residues. Residues 670-686 (RQEDSFTSRNDDLDKEQ) are compositionally biased toward basic and acidic residues. Residue serine 689 is modified to Phosphoserine. The C2H2-type 1 zinc finger occupies 709–732 (YICKECQRKFSSGHHLTRHKKSVH). Residues 738-763 (HSCPKCGKRFKRRDHVLQHLNKKIPC) form a C2H2-type 2; atypical zinc finger. The segment at 774–796 (IMNPTVQPQDGKAAINQQSTPLN) is disordered.

In terms of processing, RAD53-dependent phosphorylated in response to DNA damage.

It is found in the nucleus. Functionally, transcriptional repressor of photolyase PHR1. Recognizes and binds the sequence AG(4) in the upstream repressing sequence of PHR1. Derepresses PHR1 transcription when phosphorylated. In Saccharomyces cerevisiae (strain ATCC 204508 / S288c) (Baker's yeast), this protein is DNA damage-responsive transcriptional repressor RPH1 (RPH1).